The primary structure comprises 313 residues: uncharacterized protein (313 aa).

6 consecutive transmembrane segments (helical) span residues 16-36 (AGTW…AFLA), 106-126 (FTIL…ANEF), 155-175 (FGLL…LIFF), 208-228 (LSES…SAVF), 233-253 (LAVG…AFIA), and 286-306 (FSLV…FGIF).

Its subcellular location is the cell membrane. This is an uncharacterized protein from Bacillus subtilis (strain 168).